Here is a 403-residue protein sequence, read N- to C-terminus: Casein kinase I isoform delta-A (403 aa).

The Protein kinase domain maps to 9–277 (YRLGRKIGSG…YLRQLFRNLF (269 aa)). ATP-binding positions include 15–23 (IGSGSFGDI) and Lys-38. Asp-128 serves as the catalytic Proton acceptor. An autoinhibitory region spans residues 315-340 (QGRIPLPRVMLPTSSGRPRGTQEVAP). Residues 322-403 (RVMLPTSSGR…PSGLQSAVPR (82 aa)) are disordered.

Belongs to the protein kinase superfamily. Monomer. Interacts with per1 and per2. Component of the circadian core oscillator. Autophosphorylated on serine and threonine residues.

It is found in the cytoplasm. Its subcellular location is the nucleus. It catalyses the reaction L-seryl-[protein] + ATP = O-phospho-L-seryl-[protein] + ADP + H(+). It carries out the reaction L-threonyl-[protein] + ATP = O-phospho-L-threonyl-[protein] + ADP + H(+). With respect to regulation, exhibits substrate-dependent heparin activation. Casein kinases are operationally defined by their preferential utilization of acidic proteins such as caseins as substrates. Central component of the circadian clock. May act as a negative regulator of circadian rhythmicity by phosphorylating per1 and per2, which may lead to their degradation. Participates in wnt signaling. The sequence is that of Casein kinase I isoform delta-A (csnk1da) from Danio rerio (Zebrafish).